The primary structure comprises 161 residues: Transcription elongation factor GreA (161 aa).

The protein belongs to the GreA/GreB family.

Necessary for efficient RNA polymerase transcription elongation past template-encoded arresting sites. The arresting sites in DNA have the property of trapping a certain fraction of elongating RNA polymerases that pass through, resulting in locked ternary complexes. Cleavage of the nascent transcript by cleavage factors such as GreA or GreB allows the resumption of elongation from the new 3'terminus. GreA releases sequences of 2 to 3 nucleotides. In Desulfotalea psychrophila (strain LSv54 / DSM 12343), this protein is Transcription elongation factor GreA.